Reading from the N-terminus, the 176-residue chain is Retinol-binding protein 4-B (176 aa).

S1 is subject to N-acetylserine. Cystine bridges form between C3–C159, C69–C173, and C119–C128. Q97 provides a ligand contact to substrate.

It belongs to the calycin superfamily. Lipocalin family.

It is found in the secreted. Its function is as follows. RBP delivers retinol from the liver stores to the peripheral tissues. In plasma, the RBP-retinol complex interacts with transthyretin, this prevents its loss by filtration through the kidney glomeruli. This Oncorhynchus mykiss (Rainbow trout) protein is Retinol-binding protein 4-B (rbp4b).